A 160-amino-acid polypeptide reads, in one-letter code: Type IV major fimbrial protein FimA (160 aa).

A propeptide spans 1-7 (MKSLQKG) (leader sequence). The residue at position 8 (phenylalanine 8) is an N-methylphenylalanine. Residues 8 to 28 (FTLIELMIVVAIIGILAAFAI) traverse the membrane as a helical segment. A disulfide bridge connects residues cysteine 63 and cysteine 106.

It belongs to the N-Me-Phe pilin family. In terms of assembly, the pili are polar flexible filaments of about 5.4 nanometers diameter and 2.5 micrometers average length; they consist of only a single polypeptide chain arranged in a helical configuration of five subunits per turn in the assembled pilus.

The protein localises to the fimbrium. Its subcellular location is the membrane. Functionally, major component of the type IV fimbriae that plays an essential role in twitching motility, natural transformation, and protease secretion. The protein is Type IV major fimbrial protein FimA (fimA) of Dichelobacter nodosus (Bacteroides nodosus).